Here is a 129-residue protein sequence, read N- to C-terminus: 3-aminoacrylate deaminase RutC (129 aa).

Belongs to the RutC family.

The catalysed reaction is (Z)-3-aminoacrylate + H2O + H(+) = 3-oxopropanoate + NH4(+). Its function is as follows. Involved in pyrimidine catabolism. Catalyzes the deamination of 3-aminoacrylate to malonic semialdehyde, a reaction that can also occur spontaneously. RutC may facilitate the reaction and modulate the metabolic fitness, rather than catalyzing essential functions. In Rhizobium rhizogenes (strain K84 / ATCC BAA-868) (Agrobacterium radiobacter), this protein is 3-aminoacrylate deaminase RutC.